A 641-amino-acid chain; its full sequence is Soluble starch synthase 1, chloroplastic/amyloplastic (641 aa).

Lys145 provides a ligand contact to ADP-alpha-D-glucose.

Belongs to the glycosyltransferase 1 family. Bacterial/plant glycogen synthase subfamily. As to expression, high expression in leaves and very low in tubers.

It is found in the plastid. It localises to the chloroplast. The protein resides in the amyloplast. It catalyses the reaction [(1-&gt;4)-alpha-D-glucosyl](n) + ADP-alpha-D-glucose = [(1-&gt;4)-alpha-D-glucosyl](n+1) + ADP + H(+). It participates in glycan biosynthesis; starch biosynthesis. Plays a minor role in starch synthesis in storage organs (tubers), but may contribute to the deposition of transient starch in chloroplasts of leaves. The polypeptide is Soluble starch synthase 1, chloroplastic/amyloplastic (Solanum tuberosum (Potato)).